The primary structure comprises 425 residues: Serine--tRNA ligase (425 aa).

An L-serine-binding site is contributed by 232 to 234 (TSE). ATP contacts are provided by residues 263-265 (RRE) and Val279. L-serine is bound at residue Glu286. 350 to 353 (EVVS) serves as a coordination point for ATP. Thr387 provides a ligand contact to L-serine.

This sequence belongs to the class-II aminoacyl-tRNA synthetase family. Type-1 seryl-tRNA synthetase subfamily. In terms of assembly, homodimer. The tRNA molecule binds across the dimer.

The protein resides in the cytoplasm. It carries out the reaction tRNA(Ser) + L-serine + ATP = L-seryl-tRNA(Ser) + AMP + diphosphate + H(+). The catalysed reaction is tRNA(Sec) + L-serine + ATP = L-seryl-tRNA(Sec) + AMP + diphosphate + H(+). It functions in the pathway aminoacyl-tRNA biosynthesis; selenocysteinyl-tRNA(Sec) biosynthesis; L-seryl-tRNA(Sec) from L-serine and tRNA(Sec): step 1/1. Its function is as follows. Catalyzes the attachment of serine to tRNA(Ser). Is also able to aminoacylate tRNA(Sec) with serine, to form the misacylated tRNA L-seryl-tRNA(Sec), which will be further converted into selenocysteinyl-tRNA(Sec). In Methanospirillum hungatei JF-1 (strain ATCC 27890 / DSM 864 / NBRC 100397 / JF-1), this protein is Serine--tRNA ligase.